A 162-amino-acid polypeptide reads, in one-letter code: HTH-type transcriptional regulator IscR (162 aa).

In terms of domain architecture, HTH rrf2-type spans 2–131 (RLTSKGRYAV…NNITLGELVN (130 aa)). Positions 28–51 (LADISERQGISLSYLEQLFSRLRK) form a DNA-binding region, H-T-H motif. 3 residues coordinate [2Fe-2S] cluster: C92, C98, and C104. Residues 141–162 (RQHNEAHRPTRAQDAIDVKLRA) form a disordered region.

Requires [2Fe-2S] cluster as cofactor.

Regulates the transcription of several operons and genes involved in the biogenesis of Fe-S clusters and Fe-S-containing proteins. The protein is HTH-type transcriptional regulator IscR of Cronobacter sakazakii (strain ATCC BAA-894) (Enterobacter sakazakii).